The following is a 384-amino-acid chain: 8-amino-7-oxononanoate synthase (384 aa).

Position 21 (R21) interacts with substrate. G108 to F109 contacts pyridoxal 5'-phosphate. H133 contributes to the substrate binding site. Positions 179, 207, and 233 each coordinate pyridoxal 5'-phosphate. K236 bears the N6-(pyridoxal phosphate)lysine mark. T352 provides a ligand contact to substrate.

It belongs to the class-II pyridoxal-phosphate-dependent aminotransferase family. BioF subfamily. Homodimer. The cofactor is pyridoxal 5'-phosphate.

The enzyme catalyses 6-carboxyhexanoyl-[ACP] + L-alanine + H(+) = (8S)-8-amino-7-oxononanoate + holo-[ACP] + CO2. It participates in cofactor biosynthesis; biotin biosynthesis. Catalyzes the decarboxylative condensation of pimeloyl-[acyl-carrier protein] and L-alanine to produce 8-amino-7-oxononanoate (AON), [acyl-carrier protein], and carbon dioxide. The protein is 8-amino-7-oxononanoate synthase of Escherichia coli O6:H1 (strain CFT073 / ATCC 700928 / UPEC).